Consider the following 397-residue polypeptide: Probable protein phosphatase 2C 74 (397 aa).

The PPM-type phosphatase domain occupies 133–391 (GFWVASRRGL…DDVTVMVVDL (259 aa)). D170, G171, D343, and D382 together coordinate Mn(2+).

This sequence belongs to the PP2C family. The cofactor is Mg(2+). It depends on Mn(2+) as a cofactor.

It catalyses the reaction O-phospho-L-seryl-[protein] + H2O = L-seryl-[protein] + phosphate. The catalysed reaction is O-phospho-L-threonyl-[protein] + H2O = L-threonyl-[protein] + phosphate. The sequence is that of Probable protein phosphatase 2C 74 from Oryza sativa subsp. japonica (Rice).